The following is a 425-amino-acid chain: D-arabinitol transporter (425 aa).

The Cytoplasmic portion of the chain corresponds to 1-7 (MSINNKQ). Residues 8-28 (WLGLPLNLLWGYIAIAVFMTG) form a helical membrane-spanning segment. Residues 29-51 (DGFELAFLSHYIKALGFSPAEAS) lie on the Extracellular side of the membrane. The helical transmembrane segment at 52–72 (FAFTLYGLAAALSAWISGVVA) threads the bilayer. Topologically, residues 73-80 (EIITPLKT) are cytoplasmic. The chain crosses the membrane as a helical span at residues 81–101 (MMIGFVLWCVFHVLFLVFGLG). The Extracellular segment spans residues 102–107 (HANYAL). A helical transmembrane segment spans residues 108–128 (ILLFYGIRGFAYPLFLYSFIV). Over 129–141 (AIVHNVKSDNASS) the chain is Cytoplasmic. A helical membrane pass occupies residues 142 to 162 (AIGWFWAVYSIGIGVFGSYIP). At 163-172 (SFTIPHIGEM) the chain is on the extracellular side. A helical transmembrane segment spans residues 173–193 (GTLWLALAFCLTGGVIALVSL). Residues 194-237 (RHIQTPQHMQNLTTREKFSELGRAATLLYTNRNILLSSMVRIIN) lie on the Cytoplasmic side of the membrane. A helical membrane pass occupies residues 238–258 (TLSLFGFAVIMPMMFVDELGF). Topologically, residues 259 to 263 (STSEW) are extracellular. A helical membrane pass occupies residues 264–284 (LQVWAVFFFTTIFSNVLWGIL). Residues 285 to 295 (GEKLGWMKVVR) are Cytoplasmic-facing. The chain crosses the membrane as a helical span at residues 296–316 (WFGCIGMALSSLAFYYIPQHF). At 317-323 (GHSFAMA) the chain is on the extracellular side. A helical transmembrane segment spans residues 324 to 344 (LIPAIALGIFVAAFVPLAAVF). Topologically, residues 345-360 (PALEPKHKGAAISVYN) are cytoplasmic. Residues 361–381 (LSAGMSNFLAPAIAVVLLPFF) traverse the membrane as a helical segment. Residues 382 to 383 (ST) lie on the Extracellular side of the membrane. Residues 384 to 404 (IGVVIAYTALYVVAFFLCAFI) traverse the membrane as a helical segment. The Cytoplasmic segment spans residues 405–425 (RVEQPGFSHKEATAREQVEFS).

This sequence belongs to the major facilitator superfamily. Sugar transporter (TC 2.A.1.1) family. CsbX subfamily.

The protein resides in the cell membrane. The polypeptide is D-arabinitol transporter (dalT) (Klebsiella pneumoniae).